The following is a 354-amino-acid chain: Uroporphyrinogen decarboxylase (354 aa).

Residues 27–31, Phe46, Asp77, Tyr154, Thr209, and His327 each bind substrate; that span reads RQAGR.

The protein belongs to the uroporphyrinogen decarboxylase family. Homodimer.

It localises to the cytoplasm. It carries out the reaction uroporphyrinogen III + 4 H(+) = coproporphyrinogen III + 4 CO2. Its pathway is porphyrin-containing compound metabolism; protoporphyrin-IX biosynthesis; coproporphyrinogen-III from 5-aminolevulinate: step 4/4. Catalyzes the decarboxylation of four acetate groups of uroporphyrinogen-III to yield coproporphyrinogen-III. The chain is Uroporphyrinogen decarboxylase from Escherichia coli O157:H7.